A 91-amino-acid polypeptide reads, in one-letter code: Small ribosomal subunit protein uS19 (91 aa).

The protein belongs to the universal ribosomal protein uS19 family.

Functionally, protein S19 forms a complex with S13 that binds strongly to the 16S ribosomal RNA. This is Small ribosomal subunit protein uS19 from Fusobacterium nucleatum subsp. nucleatum (strain ATCC 25586 / DSM 15643 / BCRC 10681 / CIP 101130 / JCM 8532 / KCTC 2640 / LMG 13131 / VPI 4355).